Here is a 537-residue protein sequence, read N- to C-terminus: ATP synthase subunit alpha (537 aa).

174 to 181 (GDRQTGKT) provides a ligand contact to ATP.

This sequence belongs to the ATPase alpha/beta chains family. F-type ATPases have 2 components, CF(1) - the catalytic core - and CF(0) - the membrane proton channel. CF(1) has five subunits: alpha(3), beta(3), gamma(1), delta(1), epsilon(1). CF(0) has three main subunits: a(1), b(2) and c(9-12). The alpha and beta chains form an alternating ring which encloses part of the gamma chain. CF(1) is attached to CF(0) by a central stalk formed by the gamma and epsilon chains, while a peripheral stalk is formed by the delta and b chains.

The protein resides in the cell inner membrane. The enzyme catalyses ATP + H2O + 4 H(+)(in) = ADP + phosphate + 5 H(+)(out). Functionally, produces ATP from ADP in the presence of a proton gradient across the membrane. The alpha chain is a regulatory subunit. This is ATP synthase subunit alpha from Verminephrobacter eiseniae (strain EF01-2).